Reading from the N-terminus, the 205-residue chain is uncharacterized protein (205 aa).

Polar residues predominate over residues 1–25 (MSNNNNEAQQPVESTNVESQQNVVQ). A disordered region spans residues 1–205 (MSNNNNEAQQ…TSDPAQQVEA (205 aa)). A compositionally biased stretch (low complexity) spans 32-79 (NENNDNNNNNNNNNNNNNNNNNNNNNNNNSNNNNNSSNNENNENNENN). The segment covering 80-122 (SCEKSEQEKPKEPEEPVQEEKSKEPCDQQKVKENEPAEEKETE) has biased composition (basic and acidic residues). Composition is skewed to low complexity over residues 123-132 (PAAPVEPENP) and 146-162 (QHQQQNHEPQQTSNGES). The segment covering 170–185 (SENKKRSIDEAGDIKD) has biased composition (basic and acidic residues). Over residues 194–205 (VETSDPAQQVEA) the composition is skewed to polar residues.

This is an uncharacterized protein from Dictyostelium discoideum (Social amoeba).